The primary structure comprises 507 residues: Tryptophan aminotransferase-related protein 2 (507 aa).

Residues 91–135 (PPPHHHHHDAGLATRSSDAAVHRRARTASSMAPSTGKPAVTTDSV) are disordered. Pyridoxal 5'-phosphate contacts are provided by residues tyrosine 169, 211–212 (ST), asparagine 282, 304–307 (DLAY), 327–330 (TVSK), and arginine 338. At lysine 330 the chain carries N6-(pyridoxal phosphate)lysine.

Belongs to the alliinase family. Pyridoxal 5'-phosphate is required as a cofactor. As to expression, widely expressed.

The catalysed reaction is L-tryptophan + 2-oxoglutarate = indole-3-pyruvate + L-glutamate. The protein operates within plant hormone metabolism; auxin biosynthesis. Functionally, probable tryptophan aminotransferase involved in auxin (IAA) biosynthesis. Required for auxin production to initiate multiple change in growth in response to environmental and developmental cues. Functions upstream of YUCCA1 in auxin biosynthesis. Required for polar auxin transport. This chain is Tryptophan aminotransferase-related protein 2, found in Oryza sativa subsp. japonica (Rice).